Here is a 225-residue protein sequence, read N- to C-terminus: Imidazole glycerol phosphate synthase subunit HisH (225 aa).

Residues 3-225 (TIAIVDYGMG…LYRNFVDWQP (223 aa)) enclose the Glutamine amidotransferase type-1 domain. The Nucleophile role is filled by cysteine 82. Active-site residues include histidine 205 and glutamate 207.

As to quaternary structure, heterodimer of HisH and HisF.

It localises to the cytoplasm. It catalyses the reaction 5-[(5-phospho-1-deoxy-D-ribulos-1-ylimino)methylamino]-1-(5-phospho-beta-D-ribosyl)imidazole-4-carboxamide + L-glutamine = D-erythro-1-(imidazol-4-yl)glycerol 3-phosphate + 5-amino-1-(5-phospho-beta-D-ribosyl)imidazole-4-carboxamide + L-glutamate + H(+). The catalysed reaction is L-glutamine + H2O = L-glutamate + NH4(+). The protein operates within amino-acid biosynthesis; L-histidine biosynthesis; L-histidine from 5-phospho-alpha-D-ribose 1-diphosphate: step 5/9. Functionally, IGPS catalyzes the conversion of PRFAR and glutamine to IGP, AICAR and glutamate. The HisH subunit catalyzes the hydrolysis of glutamine to glutamate and ammonia as part of the synthesis of IGP and AICAR. The resulting ammonia molecule is channeled to the active site of HisF. This chain is Imidazole glycerol phosphate synthase subunit HisH, found in Bordetella bronchiseptica (strain ATCC BAA-588 / NCTC 13252 / RB50) (Alcaligenes bronchisepticus).